Here is a 401-residue protein sequence, read N- to C-terminus: Elongation factor Tu (401 aa).

A tr-type G domain is found at 10-211 (KPHLNVGTIG…ALDTFVPNPK (202 aa)). Residues 19 to 26 (GHVDHGKT) form a G1 region. GTP is bound at residue 19-26 (GHVDHGKT). Thr26 provides a ligand contact to Mg(2+). Residues 62 to 66 (GITIA) form a G2 region. The segment at 83–86 (DCPG) is G3. Residues 83–87 (DCPGH) and 138–141 (NKAD) contribute to the GTP site. Residues 138-141 (NKAD) form a G4 region. The interval 179-181 (SAV) is G5.

It belongs to the TRAFAC class translation factor GTPase superfamily. Classic translation factor GTPase family. EF-Tu/EF-1A subfamily. Monomer.

It localises to the cytoplasm. The catalysed reaction is GTP + H2O = GDP + phosphate + H(+). In terms of biological role, GTP hydrolase that promotes the GTP-dependent binding of aminoacyl-tRNA to the A-site of ribosomes during protein biosynthesis. This is Elongation factor Tu from Leptospira borgpetersenii serovar Hardjo-bovis (strain JB197).